Reading from the N-terminus, the 202-residue chain is uncharacterized protein (202 aa).

An Isoglutamyl lysine isopeptide (Lys-Gln) (interchain with Q-Cter in protein Pup) cross-link involves residue K136.

This is an uncharacterized protein from Mycobacterium tuberculosis (strain CDC 1551 / Oshkosh).